We begin with the raw amino-acid sequence, 768 residues long: Ral guanine nucleotide dissociation stimulator-like 1 (768 aa).

The N-terminal Ras-GEF domain maps to 65–196 (KIRTIKAGTL…RAQNLLEQFQ (132 aa)). In terms of domain architecture, Ras-GEF spans 232–501 (SEDLVAEQLT…YALSCEIEAA (270 aa)). At Ser-520 the chain carries Phosphoserine. The disordered stretch occupies residues 530–623 (PGSTPTKEQP…PPTCNNNPKI (94 aa)). 2 stretches are compositionally biased toward low complexity: residues 541 to 561 (SAASGSSGESMDSVSVSSCES) and 586 to 596 (ESSSSCSSIHS). The span at 597–621 (MDTNSSGMSSLINPLSSPPTCNNNP) shows a compositional bias: polar residues. The region spanning 648–735 (DTCIIRISVE…FDFILRKKNS (88 aa)) is the Ras-associating domain.

Interacts with Ras.

In terms of biological role, probable guanine nucleotide exchange factor. This Mus musculus (Mouse) protein is Ral guanine nucleotide dissociation stimulator-like 1 (Rgl1).